The following is a 603-amino-acid chain: Penicillin-binding protein activator LpoA (603 aa).

An N-terminal signal peptide occupies residues 1 to 26 (MANMTPRKNSVTRLIAPVALALTLAA). Residue Cys-27 is the site of N-palmitoyl cysteine attachment. Cys-27 is lipidated: S-diacylglycerol cysteine.

Belongs to the LpoA family. In terms of assembly, interacts with PBP1a.

It localises to the cell outer membrane. Its function is as follows. Regulator of peptidoglycan synthesis that is essential for the function of penicillin-binding protein 1A (PBP1a). This chain is Penicillin-binding protein activator LpoA, found in Aliivibrio fischeri (strain ATCC 700601 / ES114) (Vibrio fischeri).